Consider the following 148-residue polypeptide: Large ribosomal subunit protein bL9 (148 aa).

This sequence belongs to the bacterial ribosomal protein bL9 family.

Functionally, binds to the 23S rRNA. This is Large ribosomal subunit protein bL9 from Bifidobacterium longum (strain DJO10A).